Reading from the N-terminus, the 237-residue chain is Golgi to ER traffic protein 1 (237 aa).

The Lumenal portion of the chain corresponds to M1–G4. Residues G5–T24 form a helical membrane-spanning segment. The Cytoplasmic segment spans residues S25–K110. The stretch at E40–N99 forms a coiled coil. A helical membrane pass occupies residues L111 to Y131. Residues H132–G176 are Lumenal-facing. Residues V177–L193 form a helical membrane-spanning segment. Topologically, residues E194–D237 are cytoplasmic. A disordered region spans residues P205–D237. Over residues T217–D237 the composition is skewed to basic and acidic residues.

This sequence belongs to the WRB/GET1 family. As to quaternary structure, component of the Golgi to ER traffic (GET) complex, which is composed of GET1, GET2 and GET3. Within the complex, GET1 and GET2 form a heterotetramer which is stabilized by phosphatidylinositol binding and which binds to the GET3 homodimer.

It localises to the endoplasmic reticulum membrane. Its subcellular location is the golgi apparatus membrane. Functionally, required for the post-translational delivery of tail-anchored (TA) proteins to the endoplasmic reticulum. Together with GET2, acts as a membrane receptor for soluble GET3, which recognizes and selectively binds the transmembrane domain of TA proteins in the cytosol. The GET complex cooperates with the HDEL receptor ERD2 to mediate the ATP-dependent retrieval of resident ER proteins that contain a C-terminal H-D-E-L retention signal from the Golgi to the ER. The protein is Golgi to ER traffic protein 1 of Zygosaccharomyces rouxii (strain ATCC 2623 / CBS 732 / NBRC 1130 / NCYC 568 / NRRL Y-229).